Reading from the N-terminus, the 677-residue chain is MKQEEAKLELDKLNSQIQHHDFLYYTQDNPQITDAEYDVLCHKRNLILESFPELASNNNYQDNVGSTPDAKFAKVKHAEKMLSLDNAFNQQDIEKFITRTKKLLDMDNSQSIAISCELKIDGLSFSVIYKKGEISQASTRGNGYFGENITNNVKTIKNLPHTIQNAPDSLEVRGEIYIDRSDFIQLNKDGNNFANPRNAAAGSVRQLDINITAQRKLKYFMYTIVNTKCLTQEETLNQLKTLGFCVNEHTITTNNIEDALNFYNQFYNNRSNISYDIDGIIYKVNDIKSQHILGATNKSPRWAIAYKFPAAEAKTLVNKISIQIGRTGVLTPIAELSPINIGGVIVTRASLHNKSEIERKDIREGDYVIVKRAGDVIPQVVDVDKNLRAQELTKFIFPTTCPSCGSNLFQAEQEVSIYCTGELFCKNQILEKIKHFVSKDAFNIIGFGKKQLLFFYEQGLITNIVDIFTLEEKISNSDLKLESLHGWGEKSIHNLFSAINNSKTISLENFIFALGIRFVGKYIAKILAKHFLSYEKWYHEMLRLAQDENYLLNIQQIGHKTIHSLKMFFTEQHNLDTINNLVRHLTITDAKTTSHLSLLHGKTIVFTGELSNMSRHEAKTKSETAGAKVSSSLSKNTDFLIVGNNPGSKYKKAQSLNIQILTEDLWLQYISPNTNEN.

NAD(+)-binding positions include 34 to 38, 83 to 84, and Glu117; these read DAEYD and SL. Lys119 functions as the N6-AMP-lysine intermediate in the catalytic mechanism. Positions 140, 175, 283, and 307 each coordinate NAD(+). Zn(2+)-binding residues include Cys401, Cys404, Cys419, and Cys425. The 84-residue stretch at 594-677 folds into the BRCT domain; that stretch reads SHLSLLHGKT…QYISPNTNEN (84 aa).

Belongs to the NAD-dependent DNA ligase family. LigA subfamily. The cofactor is Mg(2+). Mn(2+) serves as cofactor.

It catalyses the reaction NAD(+) + (deoxyribonucleotide)n-3'-hydroxyl + 5'-phospho-(deoxyribonucleotide)m = (deoxyribonucleotide)n+m + AMP + beta-nicotinamide D-nucleotide.. DNA ligase that catalyzes the formation of phosphodiester linkages between 5'-phosphoryl and 3'-hydroxyl groups in double-stranded DNA using NAD as a coenzyme and as the energy source for the reaction. It is essential for DNA replication and repair of damaged DNA. The protein is DNA ligase of Ehrlichia canis (strain Jake).